The following is a 311-amino-acid chain: Splicing factor spf30 (311 aa).

In terms of domain architecture, Tudor spans 76 to 139; sequence DFTPGNLVMA…KAMPEEKRQE (64 aa). Disordered stretches follow at residues 154-183 and 276-311; these read RSTP…RASS and STED…DEDS. A compositionally biased stretch (polar residues) spans 168–183; it reads ASMSTSPSNYASRASS. Ser-173 is subject to Phosphoserine. Residues 301–311 are compositionally biased toward basic and acidic residues; sequence HIYNYREDEDS.

This sequence belongs to the SMN family. As to quaternary structure, associates with spliceosomes.

It localises to the nucleus. Involved in spliceosome assembly. This Schizosaccharomyces pombe (strain 972 / ATCC 24843) (Fission yeast) protein is Splicing factor spf30 (spf30).